Consider the following 66-residue polypeptide: Large ribosomal subunit protein bL32 (66 aa).

This sequence belongs to the bacterial ribosomal protein bL32 family.

The protein is Large ribosomal subunit protein bL32 of Rickettsia canadensis (strain McKiel).